Reading from the N-terminus, the 282-residue chain is Elongation factor Ts (282 aa).

The segment at 79–82 is involved in Mg(2+) ion dislocation from EF-Tu; it reads TDFV.

Belongs to the EF-Ts family.

It is found in the cytoplasm. In terms of biological role, associates with the EF-Tu.GDP complex and induces the exchange of GDP to GTP. It remains bound to the aminoacyl-tRNA.EF-Tu.GTP complex up to the GTP hydrolysis stage on the ribosome. This Shewanella piezotolerans (strain WP3 / JCM 13877) protein is Elongation factor Ts.